The following is a 98-amino-acid chain: Elicitin Vex1 (98 aa).

3 disulfide bridges follow: Cys-3-Cys-71, Cys-27-Cys-56, and Cys-51-Cys-95. Asn-92 carries N-linked (GlcNAc...) asparagine glycosylation.

The protein belongs to the elicitin family.

It localises to the secreted. Its function is as follows. Induces local and distal defense responses (incompatible hypersensitive reaction) in plants from the solanaceae and cruciferae families. Elicits leaf necrosis and causes the accumulation of pathogenesis-related proteins. Might interact with the lipidic molecules of the plasma membrane. In Phytopythium vexans (Damping-off fungus), this protein is Elicitin Vex1.